The primary structure comprises 184 residues: Signal peptidase complex catalytic subunit SEC11 (184 aa).

Residues 1–28 are Cytoplasmic-facing; that stretch reads MDFIKEQYNSLVLDLRKTFRNKRDGLSH. A helical; Signal-anchor for type II membrane protein transmembrane segment spans residues 29 to 49; it reads ILNVICLLLNALMIWKLLVVF. The Lumenal segment spans residues 50–184; sequence TGCESPVVVV…MLIMILMGYE (135 aa). Residues Ser63, His101, and Asp127 each act as charge relay system in the active site. Residues 170–181 form a C-terminal short (CTS) helix region; it reads AIVSIMLIMILM.

It belongs to the peptidase S26B family. As to quaternary structure, component of the signal peptidase complex (SPC) composed of a catalytic subunit SEC11/SPC21 and three accessory subunits SPC25, SPC3/SPC22, SPC1/SPC12. Within the complex, interacts with SPC25. The complex induces a local thinning of the ER membrane which is used to measure the length of the signal peptide (SP) h-region of protein substrates. This ensures the selectivity of the complex towards h-regions shorter than 18-20 amino acids. The complex interacts with the SEC61 channel-forming translocon complex and is involved in the import of classical signal sequence-containing proteins. Phosphorylated. Phosphorylation increases catalytic activity.

The protein localises to the endoplasmic reticulum membrane. The catalysed reaction is Cleavage of hydrophobic, N-terminal signal or leader sequences from secreted and periplasmic proteins.. With respect to regulation, phosphorylation increases catalytic activity. Ca(2+) slightly increases catalytic activity in vitro. In terms of biological role, catalytic component of the signal peptidase complex (SPC) which catalyzes the cleavage of N-terminal signal sequences from nascent proteins as they are translocated into the lumen of the endoplasmic reticulum. Specifically cleaves N-terminal signal peptides that contain a hydrophobic alpha-helix (h-region) shorter than 18-20 amino acids. The sequence is that of Signal peptidase complex catalytic subunit SEC11 from Plasmodium falciparum (isolate 3D7).